The primary structure comprises 245 residues: Small ribosomal subunit protein uS2 (245 aa).

It belongs to the universal ribosomal protein uS2 family.

The polypeptide is Small ribosomal subunit protein uS2 (Pseudomonas fluorescens (strain Pf0-1)).